The chain runs to 654 residues: Fructose-1,6-bisphosphatase class 3 (654 aa).

It belongs to the FBPase class 3 family. Requires Mn(2+) as cofactor.

It catalyses the reaction beta-D-fructose 1,6-bisphosphate + H2O = beta-D-fructose 6-phosphate + phosphate. The protein operates within carbohydrate biosynthesis; gluconeogenesis. This chain is Fructose-1,6-bisphosphatase class 3, found in Staphylococcus haemolyticus (strain JCSC1435).